A 642-amino-acid polypeptide reads, in one-letter code: Envelope glycoprotein (642 aa).

An N-terminal signal peptide occupies residues 1–34 (MESPTHPKPSKDKTLSWNLAFLVGILFTIDIGMA). Topologically, residues 35–586 (NPSPHQIYNV…FNKSPWFTTL (552 aa)) are extracellular. N-linked (GlcNAc...) asparagine; by host glycosylation is found at Asn43 and Asn58. Disulfide bonds link Cys125–Cys147 and Cys139–Cys152. Residues 233–283 (PPQAMGPNLVLPDQKPPSRQSQTGSKVATQRPQTNESAPRSVAPTTMGPKR) form a disordered region. The span at 249–270 (PSRQSQTGSKVATQRPQTNESA) shows a compositional bias: polar residues. 3 N-linked (GlcNAc...) asparagine; by host glycosylation sites follow: Asn267, Asn302, and Asn307. Disulfide bonds link Cys312–Cys315, Cys312–Cys539, and Cys531–Cys538. The short motif at 312–315 (CWLC) is the CXXC element. N-linked (GlcNAc...) asparagine; by host glycans are attached at residues Asn334, Asn374, Asn390, and Asn410. A fusion peptide region spans residues 448–468 (ISLTVALMLGGLTVGGIAAGV). 2 coiled-coil regions span residues 476-525 (LETA…ILFL) and 535-571 (KEEC…SQQG). The tract at residues 514–530 (LQNRRGLDILFLQEGGL) is immunosuppression. Positions 531 to 539 (CAALKEECC) match the CX6CC motif. Residues 587–607 (ISSIMGPLLILLLILLFGPCI) form a helical membrane-spanning segment. A lipid anchor (S-palmitoyl cysteine; by host) is attached at Cys606. Topologically, residues 608 to 642 (LNRLVQFVKDRISVVQALILTQQYQQIKQYDPDRP) are cytoplasmic.

The mature envelope protein (Env) consists of a trimer of SU-TM heterodimers attached by a labile interchain disulfide bond. Post-translationally, specific enzymatic cleavages in vivo yield mature proteins. Envelope glycoproteins are synthesized as an inactive precursor that is N-glycosylated and processed likely by host cell furin or by a furin-like protease in the Golgi to yield the mature SU and TM proteins. The cleavage site between SU and TM requires the minimal sequence [KR]-X-[KR]-R. The R-peptide is released from the C-terminus of the cytoplasmic tail of the TM protein upon particle formation as a result of proteolytic cleavage by the viral protease. Cleavage of this peptide is required for TM to become fusogenic. The CXXC motif is highly conserved across a broad range of retroviral envelope proteins. It is thought to participate in the formation of a labile disulfide bond possibly with the CX6CC motif present in the transmembrane protein. Isomerization of the intersubunit disulfide bond to an SU intrachain disulfide bond is thought to occur upon receptor recognition in order to allow membrane fusion. In terms of processing, the transmembrane protein is palmitoylated. Post-translationally, the R-peptide is palmitoylated.

The protein localises to the virion membrane. Its subcellular location is the host cell membrane. In terms of biological role, the surface protein (SU) attaches the virus to the host cell by binding to its receptor. This interaction triggers the refolding of the transmembrane protein (TM) and is thought to activate its fusogenic potential by unmasking its fusion peptide. Fusion occurs at the host cell plasma membrane. Its function is as follows. The transmembrane protein (TM) acts as a class I viral fusion protein. Under the current model, the protein has at least 3 conformational states: pre-fusion native state, pre-hairpin intermediate state, and post-fusion hairpin state. During viral and target cell membrane fusion, the coiled coil regions (heptad repeats) assume a trimer-of-hairpins structure, positioning the fusion peptide in close proximity to the C-terminal region of the ectodomain. The formation of this structure appears to drive apposition and subsequent fusion of viral and target cell membranes. Membranes fusion leads to delivery of the nucleocapsid into the cytoplasm. In Felidae (cat family), this protein is Envelope glycoprotein (env).